The chain runs to 330 residues: Neurogenic differentiation factor 4 (330 aa).

The disordered stretch occupies residues 1–79 (MTKTYTKAKE…RGPKKKKMTK (79 aa)). A compositionally biased stretch (basic and acidic residues) spans 25–35 (LSSKDELKAEN). Positions 52 to 64 (DSIEEEEEEEDDG) are enriched in acidic residues. A compositionally biased stretch (basic residues) spans 67–79 (PKRRGPKKKKMTK). A Nuclear localization signal motif is present at residues 73-79 (KKKKMTK). Residues 87–139 (ARRVKANARERTRMHGLNDALDNLRRVMPCYSKTQKLSKIETLRLARNYIWAL) enclose the bHLH domain. The leucine-zipper stretch occupies residues 162 to 183 (LSQPTSNLVAGCLQLGPQTLFL).

As to quaternary structure, efficient DNA binding requires dimerization with another bHLH protein. Serine or threonine phosphorylation within the basic region may regulate neurogenic activity. Expressed in both the developing central nervous system and peripheral nervous system.

The protein resides in the nucleus. In terms of biological role, probably acts as a transcriptional activator. Mediates neuronal differentiation. Required for the regulation of amacrine cell fate specification in the retina. The protein is Neurogenic differentiation factor 4 (NEUROD4) of Gallus gallus (Chicken).